Here is a 468-residue protein sequence, read N- to C-terminus: MMSSRLNAGAMAVPAAAVAADVVDFGYAAPMPPPYVGFDPAGMGGERQLFQHGGACHGLYDGGLDFSAAAAFQEAATLGVGLPGGNLLQSLAPPAAAAATPSSLQMPMMMSLPGLPATAADVYPFGGGGFVKREDGPVLDVVGGGGGGRIGLNLGRRTYFSPADVLAVDRLLLRSRLGGMGMEMGMGMGVLGLGLAAAAHHHQPPRCQAEGCKADLSAAKHYHRRHKVCDFHAKAAAVLAAGKQQRFCQQCSRFHVLAEFDEAKRSCRKRLTEHNRRRRKPTAGGQSSKDSPPPPPSKKGTDASIASSYTSCDHHKAAASTTTASGVSCLQELADHHDVGGGHQAAMAAAPPPTLSLAALPPQEEDDEDEDGGLGNVLMMQQHHQRRRLQHDGDGDDDVAAAAAHHHLMRSLARQQQQHRHSSGCSNNNDGDDDDHNNNNNILSCSSASDQQNSSNNNNMHFFEVDFI.

Residues 204–281 (PPRCQAEGCK…TEHNRRRRKP (78 aa)) form an SBP-type zinc finger. Positions 207, 212, 229, 232, 248, 251, 255, and 267 each coordinate Zn(2+). The Bipartite nuclear localization signal signature appears at 264-280 (KRSCRKRLTEHNRRRRK). 3 disordered regions span residues 270–305 (RLTE…DASI), 354–374 (TLSL…DGGL), and 405–458 (HHHL…SNNN). Residues 363-372 (QEEDDEDEDG) are compositionally biased toward acidic residues. Residues 438–458 (NNNNILSCSSASDQQNSSNNN) are compositionally biased toward low complexity.

Ubiquitous.

It is found in the nucleus. In terms of biological role, trans-acting factor that binds specifically to the consensus nucleotide sequence 5'-TNCGTACAA-3'. The sequence is that of Squamosa promoter-binding-like protein 5 (SPL5) from Oryza sativa subsp. japonica (Rice).